The primary structure comprises 312 residues: MALKVAVQMDHISTVNITGDTTFALSLEAQKRGHELFHYTPDWLSMRDGVVSARVEKMEVRDVKGDHYTLGEPVRRDLTEMDVILLRQDPPFDMNYITTTHLLERIHPKTLVVNDPTWVRNSPEKIFVTEFPDLMPETLITKDPQEVMDFRREFGDIILKPLYGNGGAGVFHLADGDRNLTSLLEMFGQLFREPFIAQRYLKDVRAGDKRIILIDGEPVGALNRVPSETDARSNMHVGGRPEQSKLTPREREICARIGPSLKERGFILVGIDVIGDYMTEINVTSPTGIREIERFDGTNIAALFWDAVEARR.

Residues 125-309 (KIFVTEFPDL…IAALFWDAVE (185 aa)) enclose the ATP-grasp domain. 151 to 207 (RREFGDIILKPLYGNGGAGVFHLADGDRNLTSLLEMFGQLFREPFIAQRYLKDVRAG) lines the ATP pocket. Mg(2+)-binding residues include glutamate 280 and asparagine 282.

The protein belongs to the prokaryotic GSH synthase family. Mg(2+) serves as cofactor. Requires Mn(2+) as cofactor.

It catalyses the reaction gamma-L-glutamyl-L-cysteine + glycine + ATP = glutathione + ADP + phosphate + H(+). It participates in sulfur metabolism; glutathione biosynthesis; glutathione from L-cysteine and L-glutamate: step 2/2. The polypeptide is Glutathione synthetase (Brucella melitensis biotype 1 (strain ATCC 23456 / CCUG 17765 / NCTC 10094 / 16M)).